Here is a 1133-residue protein sequence, read N- to C-terminus: DNA repair protein rad8 (1133 aa).

2 disordered regions span residues 1-34 (MKRK…SKPN) and 392-413 (PEAR…EEDV). Phosphoserine is present on S18. The region spanning 516 to 705 (PNSMPYHRGG…YSLIKFMRYE (190 aa)) is the Helicase ATP-binding domain. 529–536 (DEMGLGKT) provides a ligand contact to ATP. The DEGH box motif lies at 656–659 (DEGH). The segment at 877–923 (CPICCNEPIQNPLLLNCKHACCGDCLSEHIQYQKRRNIIPPLCHTCR) adopts an RING-type zinc-finger fold. In terms of domain architecture, Helicase C-terminal spans 971–1125 (QLRQLTHSSE…EGKQQVQSIE (155 aa)).

It belongs to the SNF2/RAD54 helicase family.

It is found in the cytoplasm. The protein localises to the nucleus. In terms of biological role, probable helicase, member of the UBC2/RAD6 epistasis group. Functions with DNA repair protein rad18 in error-free postreplication DNA repair. Involved in the maintenance of wild-type rates of instability of simple repetitive sequences such as poly(GT) repeats. Plays a role in surviving topoisomerase-mediated DNA damage. The protein is DNA repair protein rad8 of Schizosaccharomyces pombe (strain 972 / ATCC 24843) (Fission yeast).